The following is a 419-amino-acid chain: Phosphoribosylamine--glycine ligase (419 aa).

An ATP-grasp domain is found at 109–311 (KQLLIEAGVP…LEKVLMACVE (203 aa)). Residue 135 to 191 (ATKMGAPIVVKADGLAAGKGVIVAQTSAEATTAIAELFDQGFEKIVVEEFLPGEEVS) participates in ATP binding. E281 and N283 together coordinate Mg(2+).

Belongs to the GARS family. It depends on Mg(2+) as a cofactor. Requires Mn(2+) as cofactor.

The enzyme catalyses 5-phospho-beta-D-ribosylamine + glycine + ATP = N(1)-(5-phospho-beta-D-ribosyl)glycinamide + ADP + phosphate + H(+). Its pathway is purine metabolism; IMP biosynthesis via de novo pathway; N(1)-(5-phospho-D-ribosyl)glycinamide from 5-phospho-alpha-D-ribose 1-diphosphate: step 2/2. This is Phosphoribosylamine--glycine ligase from Synechocystis sp. (strain ATCC 27184 / PCC 6803 / Kazusa).